Here is a 206-residue protein sequence, read N- to C-terminus: FMN-dependent NADH:quinone oxidoreductase 2 (206 aa).

Serine 10 is a binding site for FMN.

It belongs to the azoreductase type 1 family. Homodimer. It depends on FMN as a cofactor.

The catalysed reaction is 2 a quinone + NADH + H(+) = 2 a 1,4-benzosemiquinone + NAD(+). It catalyses the reaction N,N-dimethyl-1,4-phenylenediamine + anthranilate + 2 NAD(+) = 2-(4-dimethylaminophenyl)diazenylbenzoate + 2 NADH + 2 H(+). Its function is as follows. Quinone reductase that provides resistance to thiol-specific stress caused by electrophilic quinones. In terms of biological role, also exhibits azoreductase activity. Catalyzes the reductive cleavage of the azo bond in aromatic azo compounds to the corresponding amines. This is FMN-dependent NADH:quinone oxidoreductase 2 from Rhizobium etli (strain ATCC 51251 / DSM 11541 / JCM 21823 / NBRC 15573 / CFN 42).